Here is a 421-residue protein sequence, read N- to C-terminus: Enolase (421 aa).

Glutamine 165 contributes to the (2R)-2-phosphoglycerate binding site. Glutamate 207 serves as the catalytic Proton donor. Mg(2+) contacts are provided by aspartate 244, glutamate 285, and aspartate 312. Residues lysine 337, arginine 366, serine 367, and lysine 388 each coordinate (2R)-2-phosphoglycerate. Residue lysine 337 is the Proton acceptor of the active site.

Belongs to the enolase family. Mg(2+) serves as cofactor.

The protein localises to the cytoplasm. Its subcellular location is the secreted. The protein resides in the cell surface. The enzyme catalyses (2R)-2-phosphoglycerate = phosphoenolpyruvate + H2O. Its pathway is carbohydrate degradation; glycolysis; pyruvate from D-glyceraldehyde 3-phosphate: step 4/5. In terms of biological role, catalyzes the reversible conversion of 2-phosphoglycerate (2-PG) into phosphoenolpyruvate (PEP). It is essential for the degradation of carbohydrates via glycolysis. The protein is Enolase of Ehrlichia chaffeensis (strain ATCC CRL-10679 / Arkansas).